Consider the following 368-residue polypeptide: V-type proton ATPase subunit C (368 aa).

The protein belongs to the V-ATPase C subunit family. V-ATPase is a heteromultimeric enzyme composed of a peripheral catalytic V1 complex (components A to H) attached to an integral membrane V0 proton pore complex (components: a, c, c', c'' and d).

In terms of biological role, subunit of the peripheral V1 complex of vacuolar ATPase. Subunit C is necessary for the assembly of the catalytic sector of the enzyme and is likely to have a specific function in its catalytic activity. V-ATPase is responsible for acidifying a variety of intracellular compartments in eukaryotic cells. The protein is V-type proton ATPase subunit C (vatC) of Dictyostelium discoideum (Social amoeba).